A 372-amino-acid polypeptide reads, in one-letter code: MSLEAIRYDEKNHTLTILDQLRLPHESEYVPINNSDDGWKAIKDMVVRGAPAIAIVAILSLAVELVHGGKVSRDQTRAEVGSFISDRLDYLNTSRPTAVNLSDAVGSFKKLVQTQTGSASELIEAFLSASHKMLLDDVQDNKNIGKYGLEWIQKNVPQAANGHKISALTICNTGSLATAGYGTALGIIRALHEAGVLERVYALETRPYNQGSRLTAYELVHDGIPATLVTDSMAAALLRKNKDIGVIIVGADRVVLNGDTANKIGTFQLSILANHFDRKFIVAAPTTSIDVQTKSGEDIEIEERPAIELTQVKGVDANKQPLTVSVAAPGIEVWNPAFDYAPYKLIDAIVTEKGVAEKTGGEFNLKEFKSAN.

Residue Asp-252 is the Proton donor of the active site.

Belongs to the eIF-2B alpha/beta/delta subunits family. MtnA subfamily.

It localises to the cytoplasm. The protein localises to the nucleus. It catalyses the reaction 5-(methylsulfanyl)-alpha-D-ribose 1-phosphate = 5-(methylsulfanyl)-D-ribulose 1-phosphate. It participates in amino-acid biosynthesis; L-methionine biosynthesis via salvage pathway; L-methionine from S-methyl-5-thio-alpha-D-ribose 1-phosphate: step 1/6. In terms of biological role, catalyzes the interconversion of methylthioribose-1-phosphate (MTR-1-P) into methylthioribulose-1-phosphate (MTRu-1-P). The protein is Methylthioribose-1-phosphate isomerase of Yarrowia lipolytica (strain CLIB 122 / E 150) (Yeast).